The sequence spans 364 residues: Mannose-1-phosphate guanyltransferase (364 aa).

It belongs to the transferase hexapeptide repeat family.

It localises to the cytoplasm. The catalysed reaction is alpha-D-mannose 1-phosphate + GTP + H(+) = GDP-alpha-D-mannose + diphosphate. It functions in the pathway nucleotide-sugar biosynthesis; GDP-alpha-D-mannose biosynthesis; GDP-alpha-D-mannose from alpha-D-mannose 1-phosphate (GTP route): step 1/1. Involved in cell wall synthesis where it is required for glycosylation. Involved in cell cycle progression through cell-size checkpoint. This chain is Mannose-1-phosphate guanyltransferase (MPG1), found in Cryptococcus neoformans var. neoformans serotype D (strain B-3501A) (Filobasidiella neoformans).